The primary structure comprises 876 residues: MNPSYKPSDVESAAQAQWSAADAYRVTEDASRKKYYACSMLPYPSGKLHMGHVRNYTINDMLTRYLRMSGYNVLMPMGWDAFGLPAENAALKNGVPPAKWTYENIDYMRGQLQAMGLAIDWSREIATCDPSYYKWNQWLFLKMLEKGIAYRKTQVVNWDPVDQTVLANEQVIDGKGWRTGATVERREIPGYYLKISDYAEELLEHTQHKLPGWPERVKLMQENWIGKSEGVRFAFTHDIQDASGRLIQDGRMYVFTTRADTIMGVTFCAVAPEHPLAAHAATLDPKVAAFIEECKSGGTTEAELATQEKKGVPTGLTVKHPITEEQVPVWVGNYVLINYGDGAVMGVPAHDERDFAFANKYGIEIIQVVLVDDEPHFDYHRWQDWYGDKQRGVTINSDNFSGMTHKEAVAAVAHALAQKGLGEMQTTWRLRDWGVSRQRYWGTPIPIIHCDEHGAVPVPEKDLPVVLPTDCVPDGSGNPLAKHEGFHAGVVCPVCGKPARRETDTMDTFVDSSWYFMRYCDPKNEQAMVAEGADYWMPMDQYIGGIEHAILHLLYARFWTKVMRDLGLVKVDEPFSKLLTQGMVLNHIYYHRDEKGGKNYHPPLEVTPTLDAQGRIVGGTTADGTKIEYGGVGKMGKSERNGVDPQDLIEKYGADTARLYTMFTAPPEATLEWNDAAVEGSYRFLRRVWNFGVAQADVAPVAFGGQAFGKAAQALRREVHTVLRQVDYDYQRMQYNTVVSGAMKLLNALEGFKPDGSAGDAAALREGLGILLRCLYPATPHITHQLWQHLGYDKELGDLLDAPWPVVDVAALEQDEIELMLQVNGKLRGALRVPAGASKAEIEALALSCDDFVKFAEGAPAKRVIVVPGRLVNVVI.

The short motif at 42-52 is the 'HIGH' region element; the sequence is PYPSGKLHMGH. The 'KMSKS' region signature appears at 634–638; that stretch reads KMGKS. Position 637 (Lys-637) interacts with ATP.

The protein belongs to the class-I aminoacyl-tRNA synthetase family.

It localises to the cytoplasm. The enzyme catalyses tRNA(Leu) + L-leucine + ATP = L-leucyl-tRNA(Leu) + AMP + diphosphate. The polypeptide is Leucine--tRNA ligase (Variovorax paradoxus (strain S110)).